The chain runs to 246 residues: tRNA (guanine-N(7)-)-methyltransferase (246 aa).

Positions 77, 102, 129, and 152 each coordinate S-adenosyl-L-methionine. Aspartate 152 is a catalytic residue. Substrate-binding positions include lysine 156, aspartate 188, and 225–228 (TKFE).

The protein belongs to the class I-like SAM-binding methyltransferase superfamily. TrmB family.

It catalyses the reaction guanosine(46) in tRNA + S-adenosyl-L-methionine = N(7)-methylguanosine(46) in tRNA + S-adenosyl-L-homocysteine. It participates in tRNA modification; N(7)-methylguanine-tRNA biosynthesis. Its function is as follows. Catalyzes the formation of N(7)-methylguanine at position 46 (m7G46) in tRNA. This chain is tRNA (guanine-N(7)-)-methyltransferase, found in Haemophilus influenzae (strain PittGG).